Reading from the N-terminus, the 286-residue chain is Beta-lactamase SHV-2 (286 aa).

The N-terminal stretch at 1 to 21 (MRYIRLCIISLLATLPLAVHA) is a signal peptide. Ser-66 serves as the catalytic Acyl-ester intermediate. Cys-73 and Cys-119 form a disulfide bridge. Glu-164 (proton acceptor) is an active-site residue. Residue 230-232 (KTG) participates in substrate binding.

This sequence belongs to the class-A beta-lactamase family.

The catalysed reaction is a beta-lactam + H2O = a substituted beta-amino acid. Functionally, this enzyme hydrolyzes cefotaxime, ceftazidime and other broad spectrum cephalosporins. This is Beta-lactamase SHV-2 (bla) from Klebsiella pneumoniae.